Here is a 168-residue protein sequence, read N- to C-terminus: Sensor histidine kinase component HK1 (168 aa).

The region spanning 1–141 is the Histidine kinase; second part domain; sequence MPITPLLHES…ELRITLPTPR (141 aa). Residues 137–168 form a disordered region; sequence LPTPRPPFHEELPRITSSDTKDPNREHDTSDQ. Positions 143–168 are enriched in basic and acidic residues; it reads PFHEELPRITSSDTKDPNREHDTSDQ.

Interacts with HK2.

The catalysed reaction is ATP + protein L-histidine = ADP + protein N-phospho-L-histidine.. In terms of biological role, member of the three-protein two-component system HK1/HK2/TcrA. Kinase that binds ATP and catalyzes the transfer of a phosphoryl group from ATP to HK2. The polypeptide is Sensor histidine kinase component HK1 (Mycobacterium tuberculosis (strain ATCC 25618 / H37Rv)).